Reading from the N-terminus, the 345-residue chain is Eukaryotic translation initiation factor 3 subunit F (345 aa).

Residues V30 to G166 enclose the MPN domain. Residues G308–A345 are disordered. A compositionally biased stretch (gly residues) spans Q322 to G331. Residues N335–A345 are compositionally biased toward basic and acidic residues.

Belongs to the eIF-3 subunit F family. Component of the eukaryotic translation initiation factor 3 (eIF-3) complex.

The protein resides in the cytoplasm. Component of the eukaryotic translation initiation factor 3 (eIF-3) complex, which is involved in protein synthesis of a specialized repertoire of mRNAs and, together with other initiation factors, stimulates binding of mRNA and methionyl-tRNAi to the 40S ribosome. The eIF-3 complex specifically targets and initiates translation of a subset of mRNAs involved in cell proliferation. The sequence is that of Eukaryotic translation initiation factor 3 subunit F from Aspergillus clavatus (strain ATCC 1007 / CBS 513.65 / DSM 816 / NCTC 3887 / NRRL 1 / QM 1276 / 107).